A 255-amino-acid chain; its full sequence is uncharacterized protein (255 aa).

The N-terminal stretch at 1–23 (MKRLNKLVLGINLLFLVISITAG) is a signal peptide. The N-palmitoyl cysteine moiety is linked to residue Cys24. A lipid anchor (S-diacylglycerol cysteine) is attached at Cys24.

The protein belongs to the staphylococcal tandem lipoprotein family.

Its subcellular location is the cell membrane. This is an uncharacterized protein from Staphylococcus aureus (strain MRSA252).